The primary structure comprises 377 residues: Histidinol-phosphate aminotransferase (377 aa).

N6-(pyridoxal phosphate)lysine is present on Lys232.

This sequence belongs to the class-II pyridoxal-phosphate-dependent aminotransferase family. Histidinol-phosphate aminotransferase subfamily. In terms of assembly, homodimer. The cofactor is pyridoxal 5'-phosphate.

The catalysed reaction is L-histidinol phosphate + 2-oxoglutarate = 3-(imidazol-4-yl)-2-oxopropyl phosphate + L-glutamate. The protein operates within amino-acid biosynthesis; L-histidine biosynthesis; L-histidine from 5-phospho-alpha-D-ribose 1-diphosphate: step 7/9. This chain is Histidinol-phosphate aminotransferase, found in Mycobacterium sp. (strain JLS).